The primary structure comprises 360 residues: 3-dehydroquinate synthase (360 aa).

Residues 70 to 75 (DGESLK), 128 to 129 (TT), Lys-141, and Lys-150 each bind NAD(+). Zn(2+) is bound by residues Glu-182, His-243, and His-259.

Belongs to the sugar phosphate cyclases superfamily. Dehydroquinate synthase family. It depends on NAD(+) as a cofactor. Requires Co(2+) as cofactor. The cofactor is Zn(2+).

The protein resides in the cytoplasm. The enzyme catalyses 7-phospho-2-dehydro-3-deoxy-D-arabino-heptonate = 3-dehydroquinate + phosphate. The protein operates within metabolic intermediate biosynthesis; chorismate biosynthesis; chorismate from D-erythrose 4-phosphate and phosphoenolpyruvate: step 2/7. Its function is as follows. Catalyzes the conversion of 3-deoxy-D-arabino-heptulosonate 7-phosphate (DAHP) to dehydroquinate (DHQ). This Thermoplasma volcanium (strain ATCC 51530 / DSM 4299 / JCM 9571 / NBRC 15438 / GSS1) protein is 3-dehydroquinate synthase.